Reading from the N-terminus, the 1573-residue chain is Soluble scavenger receptor cysteine-rich domain-containing protein SSC5D (1573 aa).

An N-terminal signal peptide occupies residues 1 to 16; that stretch reads MRVLACLLAALVGIQA. Residues 20-120 enclose the SRCR 1 domain; the sequence is LRLADGPHGC…HEEDAGVVCA (101 aa). Intrachain disulfides connect cysteine 45–cysteine 109, cysteine 58–cysteine 119, and cysteine 89–cysteine 99. A disordered region spans residues 153-192; that stretch reads EPLVTHAPRPAGNPQNASRKKSPRPKQAKSTRAPLLTTGA. A glycan (N-linked (GlcNAc...) asparagine) is linked at asparagine 168. The span at 170–181 shows a compositional bias: basic residues; sequence SRKKSPRPKQAK. SRCR domains follow at residues 198–298 and 304–404; these read LRLV…LVCT and LRLA…AVCD. Intrachain disulfides connect cysteine 223–cysteine 287, cysteine 236–cysteine 297, cysteine 267–cysteine 277, cysteine 329–cysteine 393, cysteine 342–cysteine 403, and cysteine 373–cysteine 383. N-linked (GlcNAc...) asparagine glycosylation is found at asparagine 376 and asparagine 420. The interval 412 to 465 is disordered; the sequence is PPTAPTDSNNSTPREAASRPPSTMTSQAPGTAGVSPPPASPTVLWEPGPEAGSP. The segment covering 431–440 has biased composition (polar residues); the sequence is PPSTMTSQAP. Residues 467-568 form the SRCR 4 domain; it reads LRLVAGPSKC…HNEDVGVTCT (102 aa). Disulfide bonds link cysteine 492–cysteine 557, cysteine 505–cysteine 567, and cysteine 537–cysteine 547. The segment at 614 to 769 is disordered; that stretch reads EKTTTKAPGK…SVSTTGESGL (156 aa). Positions 626 to 637 are enriched in basic residues; it reads KSTKKWVTKNAK. Residues 654 to 671 are compositionally biased toward polar residues; that stretch reads AQSPPDLTSQTTAALTTE. The span at 672-685 shows a compositional bias: basic and acidic residues; the sequence is ASRRPTSEFTRRPT. Polar residues-rich tracts occupy residues 687–702 and 711–735; these read EAPQ…TLTP and KTMA…SIPQ. Residues 772-872 enclose the SRCR 5 domain; the sequence is VRLADGPNRC…HEEDVGLTCT (101 aa). 3 disulfide bridges follow: cysteine 797/cysteine 861, cysteine 810/cysteine 871, and cysteine 841/cysteine 851. Disordered stretches follow at residues 895–1475 and 1554–1573; these read KGTT…PCVA and MPAP…RGDV. The span at 924–934 shows a compositional bias: basic and acidic residues; that stretch reads RLPDTGSKDGY. Composition is skewed to pro residues over residues 1004–1020 and 1083–1093; these read PPTP…PPGP and TPEPSPTPLPT. Residues 1101–1140 are compositionally biased toward polar residues; sequence DPSTPSEVTSLSPTSEQVPESDTTPDLDTTPYSSTVSEYS. Over residues 1144 to 1160 the composition is skewed to pro residues; the sequence is DPSPSPHPTTTPDPTMA. Composition is skewed to low complexity over residues 1161 to 1175 and 1185 to 1277; these read PDPI…TPHF and PHPT…MPHP. The segment covering 1278-1328 has biased composition (pro residues); it reads TTTPHPTTTPHPTTTPHPTTTPHPTMTPDPTTTPYPTTTPDPTTTPHPTTP. 2 stretches are compositionally biased toward polar residues: residues 1335–1354 and 1364–1380; these read VITT…SPTL and PQLT…TSQI. The span at 1381-1401 shows a compositional bias: low complexity; the sequence is PTLEPSPALESSPSRSSTATS. A compositionally biased stretch (pro residues) spans 1464–1475; that stretch reads GQSPGPHGPCVA.

Interacts with LGALS1 and laminin. As to expression, highly expressed in monocytes/macrophages and T-lymphocytes. Highly expressed in placenta and spleen, and also detected at lower levels in colon, and more weakly in lung, heart and kidney.

It localises to the secreted. The protein resides in the cytoplasm. In terms of biological role, binds to extracellular matrix proteins. Binds to pathogen-associated molecular patterns (PAMPs) present on the cell walls of Gram-positive and Gram-negative bacteria and fungi, behaving as a pattern recognition receptor (PRR). Induces bacterial and fungal aggregation and subsequent inhibition of PAMP-induced cytokine release. Does not possess intrinsic bactericidal activity. May play a role in the innate defense and homeostasis of certain epithelial surfaces. In Homo sapiens (Human), this protein is Soluble scavenger receptor cysteine-rich domain-containing protein SSC5D (SSC5D).